The following is a 411-amino-acid chain: Lissencephaly-1 homolog (411 aa).

Residues 9 to 41 (QREELNQAIADYLGSNGYADSLETFRKEADLST) form the LisH domain. Residues 56–83 (TSVIRLQKKVMELEAKLTEAEKEVIEGA) adopt a coiled-coil conformation. 7 WD repeats span residues 106 to 147 (GHRA…RSLK), 148 to 187 (GHTD…ECIK), 191 to 230 (GHDH…CVKT), 233 to 272 (GHRE…CKVE), 275 to 334 (DHEH…CLLT), 337 to 376 (GHDN…CMKT), and 379 to 411 (AHQH…WECR).

This sequence belongs to the WD repeat LIS1/nudF family.

It is found in the cytoplasm. Its subcellular location is the cytoskeleton. The protein resides in the microtubule organizing center. It localises to the centrosome. Functionally, positively regulates the activity of the minus-end directed microtubule motor protein dynein. May enhance dynein-mediated microtubule sliding by targeting dynein to the microtubule plus end. Required for several dynein- and microtubule-dependent processes. The polypeptide is Lissencephaly-1 homolog (Drosophila sechellia (Fruit fly)).